A 116-amino-acid chain; its full sequence is Flagellar transcriptional regulator FlhD (116 aa).

Belongs to the FlhD family. In terms of assembly, homodimer; disulfide-linked. Forms a heterohexamer composed of two FlhC and four FlhD subunits. Each FlhC binds a FlhD dimer, forming a heterotrimer, and a hexamer assembles by dimerization of two heterotrimers.

The protein localises to the cytoplasm. Functionally, functions in complex with FlhC as a master transcriptional regulator that regulates transcription of several flagellar and non-flagellar operons by binding to their promoter region. Activates expression of class 2 flagellar genes, including fliA, which is a flagellum-specific sigma factor that turns on the class 3 genes. Also regulates genes whose products function in a variety of physiological pathways. This chain is Flagellar transcriptional regulator FlhD, found in Serratia proteamaculans (strain 568).